We begin with the raw amino-acid sequence, 294 residues long: uncharacterized protein (294 aa).

A helical membrane pass occupies residues 5 to 25 (ILIILIIIIIVIISLIYLKNF). N-linked (GlcNAc...) asparagine; by host glycosylation is found at Asn151, Asn170, Asn205, and Asn271.

The protein localises to the membrane. This is an uncharacterized protein from Acanthamoeba polyphaga (Amoeba).